The following is a 223-amino-acid chain: Cuticular glutathione peroxidase (223 aa).

Positions 1–19 are cleaved as a signal peptide; sequence MSAQLLILSHVVLLQLIVA. Residue Asn-39 is glycosylated (N-linked (GlcNAc...) asparagine). Cys-74 is an active-site residue. Residue Asn-92 is glycosylated (N-linked (GlcNAc...) asparagine).

Belongs to the glutathione peroxidase family. In terms of assembly, homotetramer.

The protein resides in the secreted. The enzyme catalyses 2 glutathione + H2O2 = glutathione disulfide + 2 H2O. In terms of biological role, could inhibit the oxidative burst of leukocytes and neutralize the secondary products of lipid peroxidation, thus providing the resistance of these parasites to immune effector mechanisms and their persistence in the mammalian host. It may also be involved in the formation of cross-linking residues such as dityrosine, trityrosine and isotrityrosine identified in cuticular collagen. Highly cross-linked external cortex may also serve to protect the parasite from immune attack. This chain is Cuticular glutathione peroxidase, found in Wuchereria bancrofti.